Consider the following 341-residue polypeptide: UDP-glucose 4-epimerase (341 aa).

This sequence belongs to the polysaccharide synthase family.

The catalysed reaction is UDP-alpha-D-glucose = UDP-alpha-D-galactose. Functionally, epimerizes UDP-galactose to UDP-glucose. This is UDP-glucose 4-epimerase (capD) from Rickettsia canadensis (strain McKiel).